Consider the following 56-residue polypeptide: Ribosome biogenesis protein Nop10 (56 aa).

Belongs to the NOP10 family.

Involved in ribosome biogenesis; more specifically in 18S rRNA pseudouridylation and in cleavage of pre-rRNA. This is Ribosome biogenesis protein Nop10 from Saccharolobus islandicus (strain Y.N.15.51 / Yellowstone #2) (Sulfolobus islandicus).